Consider the following 178-residue polypeptide: Large ribosomal subunit protein uL5 (178 aa).

It belongs to the universal ribosomal protein uL5 family. As to quaternary structure, part of the 50S ribosomal subunit; contacts the 5S rRNA and probably tRNA. Forms a bridge to the 30S subunit in the 70S ribosome.

Functionally, this is one of the proteins that bind and probably mediate the attachment of the 5S RNA into the large ribosomal subunit, where it forms part of the central protuberance. In the 70S ribosome it contacts protein S13 of the 30S subunit (bridge B1b), connecting the 2 subunits; this bridge is implicated in subunit movement. May contact the P site tRNA; the 5S rRNA and some of its associated proteins might help stabilize positioning of ribosome-bound tRNAs. In Archaeoglobus fulgidus (strain ATCC 49558 / DSM 4304 / JCM 9628 / NBRC 100126 / VC-16), this protein is Large ribosomal subunit protein uL5.